A 423-amino-acid polypeptide reads, in one-letter code: Progestin and adipoQ receptor-like protein 1 (423 aa).

The Cytoplasmic portion of the chain corresponds to 1 to 201 (MDPDEVNQAL…KSIWSLHTET (201 aa)). The tract at residues 54-140 (VVSPTNSDDE…DEDELEVDVK (87 aa)) is disordered. Over residues 60–69 (SDDEEGEFCS) the composition is skewed to acidic residues. The segment covering 104–114 (TVLRYRRKKGG) has biased composition (basic residues). A helical transmembrane segment spans residues 202–222 (GNIWTHLIGCVAFFLLACWFL). Over 223–234 (TRPDNHIQFQEK) the chain is Extracellular. The helical transmembrane segment at 235-252 (VVFSFFFAGAVSVSDSRS) threads the bilayer. Residues 253–288 (PSTPSRVIRSTSSRYSANSTIWESRCSLSARLFQPK) are Cytoplasmic-facing. The chain crosses the membrane as a helical span at residues 289-309 (ITYIAMVCVLGIGAIVVSLWD). Residues 310–320 (KFSESKYRPVR) lie on the Extracellular side of the membrane. The helical transmembrane segment at 321–341 (AAVFVGMGCSGVIPTIHYIIT) threads the bilayer. Residues 342–351 (DGVHSLFADN) lie on the Cytoplasmic side of the membrane. The helical transmembrane segment at 352 to 372 (SFHWLLLMAFLYLLGAALYAT) threads the bilayer. Over 373 to 392 (RTPERFFPGKCDIWFQSHQL) the chain is Extracellular. Residues 393–413 (FHTCVVIAAFVHYYGISEMAF) form a helical membrane-spanning segment. Topologically, residues 414–423 (ARLNEQCPVR) are cytoplasmic.

This sequence belongs to the ADIPOR family.

Its subcellular location is the membrane. Probable receptor, which may be involved in metabolic pathways that regulate lipid metabolism such as fatty acid oxidation. In Caenorhabditis briggsae, this protein is Progestin and adipoQ receptor-like protein 1.